A 62-amino-acid chain; its full sequence is MSDKNIRITQVRSIIGCTKKQKATIKSLGLGRPNYQVEKPDNPCTRGQVKVVQHIVKVEELS.

This sequence belongs to the universal ribosomal protein uL30 family. As to quaternary structure, part of the 50S ribosomal subunit.

The polypeptide is Large ribosomal subunit protein uL30 (Prosthecochloris aestuarii (strain DSM 271 / SK 413)).